The primary structure comprises 276 residues: NAD-capped RNA hydrolase NudC (276 aa).

Arginine 82 contacts substrate. Positions 112 and 115 each coordinate Zn(2+). Glutamate 125 contacts substrate. Zn(2+) is bound by residues cysteine 130 and cysteine 133. Tyrosine 138 is a substrate binding site. The 124-residue stretch at 139–262 (PRISPSMIVL…SIARYLIDLY (124 aa)) folds into the Nudix hydrolase domain. Positions 172, 188, and 192 each coordinate a divalent metal cation. The Nudix box signature appears at 173–194 (GFAEPGESAEDCLVREVREEVA). 206 to 213 (QCWPFPHS) is a substrate binding site. Residue glutamate 233 participates in a divalent metal cation binding. Alanine 255 provides a ligand contact to substrate.

It belongs to the Nudix hydrolase family. NudC subfamily. As to quaternary structure, homodimer. Requires Mg(2+) as cofactor. The cofactor is Mn(2+). It depends on Zn(2+) as a cofactor.

The enzyme catalyses a 5'-end NAD(+)-phospho-ribonucleoside in mRNA + H2O = a 5'-end phospho-adenosine-phospho-ribonucleoside in mRNA + beta-nicotinamide D-ribonucleotide + 2 H(+). The catalysed reaction is NAD(+) + H2O = beta-nicotinamide D-ribonucleotide + AMP + 2 H(+). It carries out the reaction NADH + H2O = reduced beta-nicotinamide D-ribonucleotide + AMP + 2 H(+). Functionally, mRNA decapping enzyme that specifically removes the nicotinamide adenine dinucleotide (NAD) cap from a subset of mRNAs by hydrolyzing the diphosphate linkage to produce nicotinamide mononucleotide (NMN) and 5' monophosphate mRNA. The NAD-cap is present at the 5'-end of some mRNAs and stabilizes RNA against 5'-processing. Has preference for mRNAs with a 5'-end purine. Catalyzes the hydrolysis of a broad range of dinucleotide pyrophosphates. The sequence is that of NAD-capped RNA hydrolase NudC from Pseudomonas putida (strain ATCC 47054 / DSM 6125 / CFBP 8728 / NCIMB 11950 / KT2440).